Here is a 212-residue protein sequence, read N- to C-terminus: Urease accessory protein UreG 2 (212 aa).

11–18 is a binding site for GTP; the sequence is GPVGSGKT.

Belongs to the SIMIBI class G3E GTPase family. UreG subfamily. Homodimer. UreD, UreF and UreG form a complex that acts as a GTP-hydrolysis-dependent molecular chaperone, activating the urease apoprotein by helping to assemble the nickel containing metallocenter of UreC. The UreE protein probably delivers the nickel.

It localises to the cytoplasm. In terms of biological role, facilitates the functional incorporation of the urease nickel metallocenter. This process requires GTP hydrolysis, probably effectuated by UreG. This chain is Urease accessory protein UreG 2, found in Brucella abortus (strain 2308).